The following is a 224-amino-acid chain: UPF0173 metal-dependent hydrolase Memar_1421 (224 aa).

Belongs to the UPF0173 family.

This is UPF0173 metal-dependent hydrolase Memar_1421 from Methanoculleus marisnigri (strain ATCC 35101 / DSM 1498 / JR1).